A 298-amino-acid polypeptide reads, in one-letter code: N-acetylmuramic acid 6-phosphate etherase (298 aa).

In terms of domain architecture, SIS spans 55-218 (IHAQVSGGGR…STGLMIKSGK (164 aa)). Glu-83 acts as the Proton donor in catalysis. The active site involves Glu-114.

The protein belongs to the GCKR-like family. MurNAc-6-P etherase subfamily. In terms of assembly, homodimer.

The catalysed reaction is N-acetyl-D-muramate 6-phosphate + H2O = N-acetyl-D-glucosamine 6-phosphate + (R)-lactate. Its pathway is amino-sugar metabolism; 1,6-anhydro-N-acetylmuramate degradation. It functions in the pathway amino-sugar metabolism; N-acetylmuramate degradation. It participates in cell wall biogenesis; peptidoglycan recycling. Its function is as follows. Specifically catalyzes the cleavage of the D-lactyl ether substituent of MurNAc 6-phosphate, producing GlcNAc 6-phosphate and D-lactate. Together with AnmK, is also required for the utilization of anhydro-N-acetylmuramic acid (anhMurNAc) either imported from the medium or derived from its own cell wall murein, and thus plays a role in cell wall recycling. The chain is N-acetylmuramic acid 6-phosphate etherase from Shigella dysenteriae serotype 1 (strain Sd197).